A 285-amino-acid chain; its full sequence is Inositol oxygenase (285 aa).

R29 lines the substrate pocket. S33 bears the Phosphoserine mark. D85–S87 lines the substrate pocket. Fe cation-binding residues include H98, H123, and D124. Residues K127 and G141–D142 contribute to the substrate site. Fe cation-binding residues include H194, H220, and D253. H220 to S221 contributes to the substrate binding site.

Belongs to the myo-inositol oxygenase family. Requires Fe cation as cofactor. Kidney specific.

Its subcellular location is the cytoplasm. It catalyses the reaction myo-inositol + O2 = D-glucuronate + H2O + H(+). The protein operates within polyol metabolism; myo-inositol degradation into D-glucuronate; D-glucuronate from myo-inositol: step 1/1. The chain is Inositol oxygenase (Miox) from Rattus norvegicus (Rat).